The following is a 316-amino-acid chain: Transaldolase (316 aa).

Lys132 acts as the Schiff-base intermediate with substrate in catalysis.

It belongs to the transaldolase family. Type 1 subfamily. In terms of assembly, homodimer.

It is found in the cytoplasm. It carries out the reaction D-sedoheptulose 7-phosphate + D-glyceraldehyde 3-phosphate = D-erythrose 4-phosphate + beta-D-fructose 6-phosphate. It participates in carbohydrate degradation; pentose phosphate pathway; D-glyceraldehyde 3-phosphate and beta-D-fructose 6-phosphate from D-ribose 5-phosphate and D-xylulose 5-phosphate (non-oxidative stage): step 2/3. Functionally, transaldolase is important for the balance of metabolites in the pentose-phosphate pathway. The protein is Transaldolase of Marinomonas sp. (strain MWYL1).